A 297-amino-acid polypeptide reads, in one-letter code: 33 kDa chaperonin (297 aa).

2 cysteine pairs are disulfide-bonded: C234/C236 and C267/C270.

Belongs to the HSP33 family. Under oxidizing conditions two disulfide bonds are formed involving the reactive cysteines. Under reducing conditions zinc is bound to the reactive cysteines and the protein is inactive.

The protein resides in the cytoplasm. Functionally, redox regulated molecular chaperone. Protects both thermally unfolding and oxidatively damaged proteins from irreversible aggregation. Plays an important role in the bacterial defense system toward oxidative stress. This chain is 33 kDa chaperonin, found in Pseudoalteromonas atlantica (strain T6c / ATCC BAA-1087).